The following is a 75-amino-acid chain: Small capsomere-interacting protein (75 aa).

This sequence belongs to the herpesviridae small capsomere-interacting protein family. Interacts with the major capsid protein/MCP.

It is found in the virion. It localises to the host nucleus. Participates in the assembly of the infectious particles by decorating the outer surface of the capsid shell and thus forming a layer between the capsid and the tegument. Complexes composed of the capsid protein VP5 and UL48A assemble together in the host cytoplasm and are translocated to the nucleus, where they accumulate and participate in capsid assembly. Its function is as follows. Participates in the assembly of the infectious particles by decorating the outer surface of the capsid shell and thus forming a layer between the capsid and the tegument. Complexes composed of the major capsid protein and small capsomere-interacting protein/SCP assemble together in the host cytoplasm and are translocated to the nucleus, where they accumulate and participate in capsid assembly. This is Small capsomere-interacting protein from Homo sapiens (Human).